Here is a 313-residue protein sequence, read N- to C-terminus: Malate dehydrogenase (313 aa).

NAD(+) is bound by residues 11 to 16 and Asp35; that span reads GSGNIG. Substrate contacts are provided by Arg84 and Arg90. NAD(+) is bound by residues Asn97 and 120 to 122; that span reads VTN. Asn122 and Arg153 together coordinate substrate. The Proton acceptor role is filled by His177.

The protein belongs to the LDH/MDH superfamily. MDH type 3 family.

It carries out the reaction (S)-malate + NAD(+) = oxaloacetate + NADH + H(+). In terms of biological role, catalyzes the reversible oxidation of malate to oxaloacetate. This chain is Malate dehydrogenase, found in Ehrlichia ruminantium (strain Welgevonden).